Reading from the N-terminus, the 168-residue chain is S-ribosylhomocysteine lyase (168 aa).

Fe cation contacts are provided by histidine 54, histidine 58, and cysteine 128.

This sequence belongs to the LuxS family. As to quaternary structure, homodimer. It depends on Fe cation as a cofactor.

It carries out the reaction S-(5-deoxy-D-ribos-5-yl)-L-homocysteine = (S)-4,5-dihydroxypentane-2,3-dione + L-homocysteine. Its function is as follows. Involved in the synthesis of autoinducer 2 (AI-2) which is secreted by bacteria and is used to communicate both the cell density and the metabolic potential of the environment. The regulation of gene expression in response to changes in cell density is called quorum sensing. Catalyzes the transformation of S-ribosylhomocysteine (RHC) to homocysteine (HC) and 4,5-dihydroxy-2,3-pentadione (DPD). The polypeptide is S-ribosylhomocysteine lyase (Neisseria gonorrhoeae (strain ATCC 700825 / FA 1090)).